A 259-amino-acid polypeptide reads, in one-letter code: Bidirectional sugar transporter SWEET4 (259 aa).

Residues 1–10 (MVSPDTIRTA) lie on the Extracellular side of the membrane. The MtN3/slv 1 domain maps to 10–94 (AIGVVGNGTA…TYIALFLAFS (85 aa)). A helical transmembrane segment spans residues 11–31 (IGVVGNGTALVLFLSPVPTFI). The Cytoplasmic segment spans residues 32–44 (RIWKKGSVEQYSA). A helical membrane pass occupies residues 45-65 (VPYVATLLNCMMWVLYGLPAV). At 66–77 (HPHSMLVITING) the chain is on the extracellular side. The N-linked (GlcNAc...) asparagine glycan is linked to Asn-76. The helical transmembrane segment at 78 to 98 (TGMAIELTYIALFLAFSLGAV) threads the bilayer. Residues 99–101 (RRR) are Cytoplasmic-facing. A helical transmembrane segment spans residues 102 to 122 (VLLLLAAEVAFVAAVAALVLN). Topologically, residues 123–131 (LAHTHERRS) are extracellular. A helical membrane pass occupies residues 132 to 152 (MIVGILCVLFGTGMYAAPLSV). In terms of domain architecture, MtN3/slv 2 spans 133 to 217 (IVGILCVLFG…ILYAIYYKST (85 aa)). The Cytoplasmic portion of the chain corresponds to 153 to 165 (MKMVIQTKSVEYM). Residues 166-186 (PLFLSLASLVNGICWTAYALI) form a helical membrane-spanning segment. The Extracellular portion of the chain corresponds to 187-191 (RFDLY). A helical membrane pass occupies residues 192 to 212 (ITIPNGLGVMFAVAQLILYAI). At 213 to 259 (YYKSTQQIIEARKRKEADHVAMTDVVVDSAKNNPSSGAAAAAANGRY) the chain is on the cytoplasmic side.

The protein belongs to the SWEET sugar transporter family. As to quaternary structure, forms homooligomers and/or heterooligomers.

The protein resides in the cell membrane. Functionally, mediates both low-affinity uptake and efflux of sugar across the plasma membrane. This is Bidirectional sugar transporter SWEET4 (SWEET4) from Oryza sativa subsp. indica (Rice).